Consider the following 89-residue polypeptide: Small ribosomal subunit protein uS15 (89 aa).

This sequence belongs to the universal ribosomal protein uS15 family. Part of the 30S ribosomal subunit. Forms a bridge to the 50S subunit in the 70S ribosome, contacting the 23S rRNA.

Functionally, one of the primary rRNA binding proteins, it binds directly to 16S rRNA where it helps nucleate assembly of the platform of the 30S subunit by binding and bridging several RNA helices of the 16S rRNA. In terms of biological role, forms an intersubunit bridge (bridge B4) with the 23S rRNA of the 50S subunit in the ribosome. The polypeptide is Small ribosomal subunit protein uS15 (Thermodesulfovibrio yellowstonii (strain ATCC 51303 / DSM 11347 / YP87)).